A 292-amino-acid polypeptide reads, in one-letter code: Short chain dehydrogenase mpl6 (292 aa).

Residues V37, D95, N122, R156, Y188, K192, V221, and T223 each coordinate NADP(+). Y188 (proton donor) is an active-site residue. K192 functions as the Lowers pKa of active site Tyr in the catalytic mechanism.

It belongs to the short-chain dehydrogenases/reductases (SDR) family.

It functions in the pathway mycotoxin biosynthesis. In terms of biological role, short chain dehydrogenase; part of the gene cluster that mediates the biosynthesis of the mycotoxin citrinin, a hepato-nephrotoxic compound to humans due to inhibition of respiration complex III. The pathway begins with the synthesis of a keto-aldehyde intermediate by the citrinin PKS (pksCT) from successive condensations of 4 malonyl-CoA units, presumably with a simple acetyl-CoA starter unit. Release of the keto-aldehyde intermediate is consistent with the presence of the C-terminal reductive release domain. Mp11 collaborates with pksCT by catalyzing the hydrolysis of ACP-bound acyl intermediates to free the ACP from stalled intermediates. Mpl2 then catalyzes the oxidation of the C-12 methyl of the ketone intermediate to an alcohol intermediate which is further oxidized by the oxidoreductase mpl7 to produce a bisaldehyde intermediate. The fourth catalytic step is catalyzed by the mpl4 aldehyde dehydrogenase. The final transformation is the reduction of C-3 by mpl6 to provide the chemically stable citrinin nucleus. The protein is Short chain dehydrogenase mpl6 of Monascus purpureus (Red mold).